The following is a 452-amino-acid chain: MKLLVILLFSGLITGFRSDSSSSLPPKLLLVSFDGFRADYLNNYEFPHLQNFIKEGVLVEHVKNVFITKTFPNHYSIVTGLYEESHGIVANSMYDAVTKKHFSDSNDKDPFWWNEAVPIWVTNQLQENRSSAAAMWPGTDVPIHNTISSYFMNYNSSVSFEERLNNITMWLNNSNPPVTFATLYWEEPDASGHKYGPEDKENMSRVLKKIDDLIGDLVQKLKMLGLWENLNVIITSDHGMTQCSQDRLINLDVCIDHSYYTLIDLSPVAAILPKINRTEVYNRLKNCSSHMNVYLKEDIPNRFYYQHNDRIQPIILVADEGWTIVLNESSQKCDHGYDNSLPSMHPFLAAHGPAFHKGYKHSTINIVDIYPMMCHILGLKPHPNNGTFGHTKCLLVDQWCINLPEAIAIVIGSLLVLTMLTCLIIIMQNRLSVPRPFSRLQLQEDDDDPLIG.

The N-terminal stretch at 1 to 15 (MKLLVILLFSGLITG) is a signal peptide. Topologically, residues 16-406 (FRSDSSSSLP…DQWCINLPEA (391 aa)) are extracellular. Positions 34 and 70 each coordinate Zn(2+). Thr70 (AMP-threonine intermediate) is an active-site residue. The substrate site is built by Asn91 and Tyr154. Asn155 and Asn166 each carry an N-linked (GlcNAc...) asparagine glycan. Zn(2+)-binding residues include Asp189, His193, Asp237, and His238. Residue Asp189 participates in substrate binding. Cys254 and Cys287 are disulfide-bonded. Asn276 carries N-linked (GlcNAc...) asparagine glycosylation. His335 is a binding site for Zn(2+). The cysteines at positions 393 and 400 are disulfide-linked. Residues 407–427 (IAIVIGSLLVLTMLTCLIIIM) traverse the membrane as a helical segment. The Cytoplasmic portion of the chain corresponds to 428 to 452 (QNRLSVPRPFSRLQLQEDDDDPLIG).

It belongs to the nucleotide pyrophosphatase/phosphodiesterase family. Zn(2+) serves as cofactor.

It localises to the cell membrane. It catalyses the reaction P(1),P(3)-bis(5'-adenosyl) triphosphate + H2O = AMP + ADP + 2 H(+). Its function is as follows. Hydrolyzes extracellular Ap3A into AMP and ADP, and Ap4A into AMP and ATP. Ap3A and Ap4A are diadenosine polyphosphates thought to induce proliferation of vascular smooth muscle cells. Acts as a procoagulant, mediating platelet aggregation at the site of nascent thrombus via release of ADP from Ap3A and activation of ADP receptors. The sequence is that of Bis(5'-adenosyl)-triphosphatase ENPP4 (ENPP4) from Pongo abelii (Sumatran orangutan).